Consider the following 366-residue polypeptide: MQTLKVDLGERSYPIHIGEGLLDQPELLAPHIAGRQVAIISNETVAPLYLERLNRSLAAYSVISVILPDGEAHKNWETLQLIFDGLLTARHDRRTTVIALGGGVIGDMAGFAAACYQRGVDFIQVPTTLLSQVDSSVGGKTGINHPLGKNMVGAFYQPQAVLIDTATLNTLPPRELSAGLAEVIKYGLICDEPFLTWLEEHVDALRNLDQVALTEAISRSCAAKALVVNADERESGVRATLNLGHTFGHAIETHMGYGVWLHGEAVAAGTVMALDMSQRLGWISAQERDRGIRLFQRAGLPVIPPEEMTEADFLEHMAIDKKVIDGRLRLVLLRHMGEAVVTDDYPKEILQATLGADYRALAQLKG.

NAD(+)-binding positions include 69–74, 103–107, 127–128, Lys140, Lys149, and 167–170; these read DGEAHK, GVIGD, TT, and TLNT. Residues Glu182, His245, and His262 each contribute to the Zn(2+) site.

This sequence belongs to the sugar phosphate cyclases superfamily. Dehydroquinate synthase family. Requires Co(2+) as cofactor. The cofactor is Zn(2+). NAD(+) serves as cofactor.

It localises to the cytoplasm. The enzyme catalyses 7-phospho-2-dehydro-3-deoxy-D-arabino-heptonate = 3-dehydroquinate + phosphate. Its pathway is metabolic intermediate biosynthesis; chorismate biosynthesis; chorismate from D-erythrose 4-phosphate and phosphoenolpyruvate: step 2/7. Catalyzes the conversion of 3-deoxy-D-arabino-heptulosonate 7-phosphate (DAHP) to dehydroquinate (DHQ). The sequence is that of 3-dehydroquinate synthase from Pseudomonas fluorescens (strain SBW25).